Here is a 297-residue protein sequence, read N- to C-terminus: Putative peptidyl-prolyl cis-trans isomerase YacD (297 aa).

The first 32 residues, Met-1–Ala-32, serve as a signal peptide directing secretion. In terms of domain architecture, PpiC spans Asp-154–Glu-247.

It catalyses the reaction [protein]-peptidylproline (omega=180) = [protein]-peptidylproline (omega=0). The sequence is that of Putative peptidyl-prolyl cis-trans isomerase YacD (yacD) from Bacillus subtilis (strain 168).